The sequence spans 1375 residues: BNI1-related protein 1 (1375 aa).

In terms of domain architecture, GBD/FH3 spans 94–490; the sequence is CMPQDASLVE…YLIDSFQVST (397 aa). A coiled-coil region spans residues 520 to 601; sequence QSDEIARRAV…ITTHQRLYDQ (82 aa). The residue at position 621 (serine 621) is a Phosphoserine. An FH1 domain is found at 659–851; the sequence is SSYLTDANNE…LVTPPAPPLP (193 aa). The segment at 661–684 is disordered; sequence YLTDANNENESQNESEDKSKDSLF. Serine 751 is modified (phosphoserine). Disordered stretches follow at residues 764–785, 817–839, and 1285–1309; these read KLPQ…QSLL, AVPP…GPSN, and KSLL…GEKV. Composition is skewed to pro residues over residues 767-781 and 818-828; these read QLPP…PPLP and VPPPPPPPPLP. Residues 868-1290 form the FH2 domain; sequence DLKPPPTEKR…YEQRKSLLDM (423 aa). One can recognise a DAD domain in the interval 1302–1336; it reads DENDGEKVNRDAVDLLISKLREVKKDPEPLRRRKS.

It belongs to the formin homology family. BNI1 subfamily. Interacts with profilin at the FH1 domain.

May organize microtubules by mediating spindle positioning and movement in the budding process. Potential target of the RHO family members. In Saccharomyces cerevisiae (strain ATCC 204508 / S288c) (Baker's yeast), this protein is BNI1-related protein 1 (BNR1).